A 381-amino-acid chain; its full sequence is Alkanesulfonate monooxygenase (381 aa).

This sequence belongs to the SsuD family. As to quaternary structure, homotetramer.

It carries out the reaction an alkanesulfonate + FMNH2 + O2 = an aldehyde + FMN + sulfite + H2O + 2 H(+). Its function is as follows. Catalyzes the desulfonation of aliphatic sulfonates. The chain is Alkanesulfonate monooxygenase from Escherichia coli O127:H6 (strain E2348/69 / EPEC).